Consider the following 236-residue polypeptide: Osmoprotectant import permease protein OsmY (236 aa).

A run of 6 helical transmembrane segments spans residues 9–29 (VLGF…GIGL), 47–67 (LMLV…SGIL), 95–115 (VLAL…VALF), 126–146 (TYAG…GIGM), 180–200 (PLAF…GIYL), and 207–227 (ILGA…LAWF). In terms of domain architecture, ABC transmembrane type-1 spans 43–224 (GQRHLMLVFT…LFALILDTLL (182 aa)).

It belongs to the binding-protein-dependent transport system permease family. As to quaternary structure, the complex is composed of two ATP-binding proteins (OsmV), two transmembrane proteins (OsmW and OsmY) and a solute-binding protein (OsmX).

It is found in the cell inner membrane. Functionally, part of the OsmU ABC transporter complex, which is involved in the uptake of osmoprotectants such as choline-O-sulfate and glycine betaine. Probably responsible for the translocation of the substrate across the membrane. This is Osmoprotectant import permease protein OsmY (osmY) from Salmonella typhimurium (strain LT2 / SGSC1412 / ATCC 700720).